The chain runs to 308 residues: Eugenol synthase 1 (308 aa).

Residues 13–16, 35–45, R36, 86–88, 111–113, K133, and 153–155 each bind NADP(+); these read TGYI, VRESTVSDPAK, QMQ, SEF, and NCF. Catalysis depends on K133, which acts as the Proton donor/acceptor.

Belongs to the NmrA-type oxidoreductase family. In terms of tissue distribution, in flowers, mostly expressed in limbs, and, to a lower extent, in tubes.

It catalyses the reaction eugenol + a carboxylate + NADP(+) = a coniferyl ester + NADPH. The enzyme catalyses eugenol + acetate + NADP(+) = (E)-coniferyl acetate + NADPH. It functions in the pathway aromatic compound metabolism; phenylpropanoid biosynthesis. Involved in the biosynthesis of the floral volatile eugenol. Catalyzes the synthesis of the phenylpropene eugenol from coniferyl acetate. Phenylpropenes are produced by plants as defense compounds with antimicrobial and antianimal properties, or as floral attractants of pollinators. The polypeptide is Eugenol synthase 1 (Petunia hybrida (Petunia)).